A 226-amino-acid polypeptide reads, in one-letter code: NifU-like protein 1, chloroplastic (226 aa).

Residues 1–76 constitute a chloroplast transit peptide; sequence MQTTTVPMAA…PVTAVQLPLT (76 aa).

This sequence belongs to the NifU family. Homodimer; disulfide-linked.

It localises to the plastid. The protein localises to the chloroplast stroma. In terms of biological role, molecular scaffold for [Fe-S] cluster assembly of chloroplastic iron-sulfur proteins. In Oryza sativa subsp. japonica (Rice), this protein is NifU-like protein 1, chloroplastic (NIFU1).